A 599-amino-acid polypeptide reads, in one-letter code: Elongation factor 4 (599 aa).

Positions 2 to 184 (NYKRNFSIIA…RLVRDIPAPK (183 aa)) constitute a tr-type G domain. Residues 14–19 (DHGKST) and 131–134 (NKID) contribute to the GTP site.

Belongs to the TRAFAC class translation factor GTPase superfamily. Classic translation factor GTPase family. LepA subfamily.

The protein localises to the cell membrane. The catalysed reaction is GTP + H2O = GDP + phosphate + H(+). Functionally, required for accurate and efficient protein synthesis under certain stress conditions. May act as a fidelity factor of the translation reaction, by catalyzing a one-codon backward translocation of tRNAs on improperly translocated ribosomes. Back-translocation proceeds from a post-translocation (POST) complex to a pre-translocation (PRE) complex, thus giving elongation factor G a second chance to translocate the tRNAs correctly. Binds to ribosomes in a GTP-dependent manner. This is Elongation factor 4 from Hamiltonella defensa subsp. Acyrthosiphon pisum (strain 5AT).